The following is a 162-amino-acid chain: MKLDQAARGLFLTELVSGFFLAMRYFFKPKATLNYPFEKGPLSPRFRGEHALRRYPNGEERCIACKLCEAICPAQAITIEAGPRRNDGTRRTTRYDIDMVKCIYCGFCQEACPVDAIVEGPNFEFAAETREELYYDKEKLLANGDRWEREIARSIAMDAPYR.

2 consecutive 4Fe-4S ferredoxin-type domains span residues 52–82 and 93–122; these read LRRY…IEAG and TRYD…EGPN. Cysteine 62, cysteine 65, cysteine 68, cysteine 72, cysteine 102, cysteine 105, cysteine 108, and cysteine 112 together coordinate [4Fe-4S] cluster.

The protein belongs to the complex I 23 kDa subunit family. In terms of assembly, NDH-1 is composed of 14 different subunits. Subunits NuoA, H, J, K, L, M, N constitute the membrane sector of the complex. [4Fe-4S] cluster is required as a cofactor.

Its subcellular location is the cell inner membrane. The enzyme catalyses a quinone + NADH + 5 H(+)(in) = a quinol + NAD(+) + 4 H(+)(out). Functionally, NDH-1 shuttles electrons from NADH, via FMN and iron-sulfur (Fe-S) centers, to quinones in the respiratory chain. The immediate electron acceptor for the enzyme in this species is believed to be ubiquinone. Couples the redox reaction to proton translocation (for every two electrons transferred, four hydrogen ions are translocated across the cytoplasmic membrane), and thus conserves the redox energy in a proton gradient. The chain is NADH-quinone oxidoreductase subunit I from Xanthobacter autotrophicus (strain ATCC BAA-1158 / Py2).